Here is a 46-residue protein sequence, read N- to C-terminus: L-amino-acid oxidase (46 aa).

Asn31 carries an N-linked (GlcNAc...) asparagine glycan.

Belongs to the flavin monoamine oxidase family. FIG1 subfamily. Requires FAD as cofactor.

It localises to the secreted. It is found in the lysosome. The protein localises to the cytoplasmic vesicle. The protein resides in the secretory vesicle. Its subcellular location is the acrosome. It carries out the reaction an L-alpha-amino acid + O2 + H2O = a 2-oxocarboxylate + H2O2 + NH4(+). The catalysed reaction is L-tryptophan + O2 + H2O = indole-3-pyruvate + H2O2 + NH4(+). The enzyme catalyses L-phenylalanine + O2 + H2O = 3-phenylpyruvate + H2O2 + NH4(+). It catalyses the reaction L-tyrosine + O2 + H2O = 3-(4-hydroxyphenyl)pyruvate + H2O2 + NH4(+). It carries out the reaction L-arginine + O2 + H2O = 5-guanidino-2-oxopentanoate + H2O2 + NH4(+). It participates in amino-acid degradation; L-tryptophan degradation via pyruvate pathway. Secreted L-amino-acid oxidase that acts as a key immunoregulator. Has preference for L-aromatic amino acids: converts phenylalanine (Phe), tyrosine (Tyr) and tryptophan (Trp) to phenylpyruvic acid (PP), hydroxyphenylpyruvic acid (HPP), and indole-3-pyruvic acid (I3P), respectively. Also has weak L-arginine oxidase activity. Acts as a negative regulator of anti-tumor immunity by mediating Trp degradation via an indole pyruvate pathway that activates the transcription factor AHR. IL4I1-mediated Trp catabolism generates I3P, giving rise to indole metabolites (indole-3-acetic acid (IAA) and indole-3-aldehyde (I3A)) and kynurenic acid, which act as ligands for AHR, a ligand-activated transcription factor that plays important roles in immunity and cancer. AHR activation by indoles following IL4I1-mediated Trp degradation enhances tumor progression by promoting cancer cell motility and suppressing adaptive immunity. Also has an immunoregulatory function in some immune cells, probably by mediating Trp degradation and promoting downstream AHR activation: inhibits T-cell activation and proliferation, promotes the differentiation of naive CD4(+) T-cells into FOXP3(+) regulatory T-cells (Treg) and regulates the development and function of B-cells. Also regulates M2 macrophage polarization by inhibiting T-cell activation. Also has antibacterial properties by inhibiting growth of Gram negative and Gram positive bacteria through the production of NH4(+) and H2O2. The protein is L-amino-acid oxidase of Mus spretus (Western Mediterranean mouse).